Reading from the N-terminus, the 931-residue chain is Protocadherin gamma-A4 (931 aa).

Positions 1–28 (MAAPPARPDHTRLLHICLLLGVLVEIRA) are cleaved as a signal peptide. Cadherin domains lie at 29 to 133 (EQIR…PPSF), 134 to 242 (GTEQ…APVF), 243 to 347 (TQPE…APEV), 348 to 452 (TVTS…PPTF), 453 to 567 (PHAS…YPTF), and 570 to 682 (DDST…KPSA). The Extracellular portion of the chain corresponds to 29-692 (EQIRYSVFEE…DPDDSGLTLY (664 aa)). N-linked (GlcNAc...) asparagine glycans are attached at residues asparagine 419 and asparagine 545. A helical membrane pass occupies residues 693 to 713 (LVVSVAAVSCVFLAFVTVLLA). The Cytoplasmic segment spans residues 714–931 (LKLRRWHKSR…KKKSGKKEKK (218 aa)). Disordered stretches follow at residues 801–840 (KGDP…WPNN) and 901–931 (ATLT…KEKK). The segment covering 805-840 (NLQQAPPNTDWRFSQAQRPGTSGSQNGDDTGTWPNN) has biased composition (polar residues). Over residues 921 to 931 (NKKKSGKKEKK) the composition is skewed to basic residues.

It localises to the cell membrane. Functionally, potential calcium-dependent cell-adhesion protein. May be involved in the establishment and maintenance of specific neuronal connections in the brain. This Pan troglodytes (Chimpanzee) protein is Protocadherin gamma-A4 (PCDHGA4).